Here is a 1076-residue protein sequence, read N- to C-terminus: Inositol-1,4,5-trisphosphate 5-phosphatase 1 (1076 aa).

The region spanning 144–474 (LRKLLTNGSF…GDALARIYTG (331 aa)) is the SAC domain. The catalytic stretch occupies residues 534 to 880 (YDPIHEYVNH…QEVRDASQTS (347 aa)). 2 disordered regions span residues 930–958 (AAPP…DWIS) and 977–1076 (LSPA…KPLV). 2 stretches are compositionally biased toward low complexity: residues 977-1004 (LSPA…IKPN) and 1025-1040 (SGSS…LTPV). A compositionally biased stretch (polar residues) spans 1065-1076 (PEESSISWKPLV).

The protein belongs to the synaptojanin family. This sequence in the central section; belongs to the inositol 1,4,5-trisphosphate 5-phosphatase family. Mg(2+) is required as a cofactor.

It localises to the cytoplasm. It carries out the reaction a 1,2-diacyl-sn-glycero-3-phospho-(1D-myo-inositol-4,5-bisphosphate) + H2O = a 1,2-diacyl-sn-glycero-3-phospho-(1D-myo-inositol 4-phosphate) + phosphate. In terms of biological role, controls the cellular levels and subcellular distribution of phosphatidylinositol 3-phosphate and phosphatidylinositol 4,5-bisphosphate. Involved in distinct membrane trafficking and signal transduction pathways. Highly active against a range of soluble and lipid inositol phosphates. Active in dephosphorylating the 5-position of Ins(1,4,5)P3 and Ins(1,3,4,5)P4 and to a lesser extent Ins(1,4,5,6)P4. The enzyme is also active against PI(4,5)P2 presented in sonicated vesicles and Triton mixed micelles, and somewhat less active against PI(3,5)P2 in unilamellar vesicles. Activity against PI(3,5)P2 drops sharply when this substrate is presented in mixed micelles. Also hydrolyzes PIP3 to produce PI(3,4)P2. This Schizosaccharomyces pombe (strain 972 / ATCC 24843) (Fission yeast) protein is Inositol-1,4,5-trisphosphate 5-phosphatase 1 (syj1).